The sequence spans 1486 residues: Homeobox protein cut-like 2 (1486 aa).

The segment at 114–167 is disordered; that stretch reads DRLQPPSFDPSGQPRRDLHTSWKRNPELLSPKEQREGTSPAGPTLTEGSRLPGI. Residues 127 to 149 are compositionally biased toward basic and acidic residues; it reads PRRDLHTSWKRNPELLSPKEQRE. Position 143 is a phosphoserine (Ser-143). The stretch at 195-374 forms a coiled coil; the sequence is TLAARLGEAE…IKTELSILKA (180 aa). Disordered regions lie at residues 415 to 481, 517 to 549, 661 to 690, 716 to 758, 800 to 858, and 964 to 1032; these read LLAS…LSPF, PTAP…PGAE, EIES…STSE, VAPR…AQAP, YASV…EGAT, and GQAV…SGSQ. The segment covering 419 to 428 has biased composition (acidic residues); that stretch reads PEEDPSEDDS. Over residues 443 to 460 the composition is skewed to pro residues; it reads QQLPPPPGPEDPLSPSPG. Low complexity predominate over residues 461-470; the sequence is QPLLGPSLGP. The span at 517 to 532 shows a compositional bias: pro residues; sequence PTAPATPAPGPEPLGG. The segment at residues 544-631 is a DNA-binding region (CUT 1); the sequence is AGPGAEEEQL…VLALRTIQVR (88 aa). The span at 680 to 690 shows a compositional bias: polar residues; sequence ANGTTPASTSE. A coiled-coil region spans residues 690-717; it reads EDAIKSILEQARREMQAQQQALLEMEVA. Low complexity predominate over residues 802–816; that stretch reads SVSPSLSSSSSSGYS. Residues 834–844 are compositionally biased toward acidic residues; that stretch reads PEDEAAAGAED. A compositionally biased stretch (basic and acidic residues) spans 845-854; the sequence is EPPRTGELKA. Positions 887–974 form a DNA-binding region, CUT 2; sequence QYELYMYREV…QAVGQQPGAS (88 aa). Residues 967–976 are compositionally biased toward polar residues; it reads VGQQPGASQA. Positions 1017-1031 are enriched in low complexity; that stretch reads GRSSSSLSGKMYSGS. Positions 1038–1125 form a DNA-binding region, CUT 3; that stretch reads QEIVAMSPEL…VEKLRDMKKL (88 aa). The segment at residues 1168–1227 is a DNA-binding region (homeobox); it reads IKKPRVVLAPEEKEALRKAYQLEPYPSQQTIELLSFQLNLKTNTVINWFHNYRSRMRREM. The segment at 1231–1453 is disordered; that stretch reads GTQDEPDLDP…ALHPSAKVNP (223 aa). Positions 1266-1276 are enriched in basic and acidic residues; the sequence is EDQKPTVKELE. Residues 1283-1293 are compositionally biased toward polar residues; the sequence is ENSTPLTTQDK. The span at 1320-1334 shows a compositional bias: basic and acidic residues; the sequence is ELDKGQGPPKEEHPD. Over residues 1381–1401 the composition is skewed to polar residues; sequence KSASESSRCSLEVSLNSPSAA. Over residues 1402–1420 the composition is skewed to low complexity; sequence SSPGLMMSVSPVPSSSAPI. A compositionally biased stretch (pro residues) spans 1421-1431; it reads SPSPPGAPPAK.

Belongs to the CUT homeobox family.

The protein resides in the nucleus. Transcription factor involved in the control of neuronal proliferation and differentiation in the brain. Regulates dendrite development and branching, dendritic spine formation, and synaptogenesis in cortical layers II-III. Binds to DNA in a sequence-specific manner. The polypeptide is Homeobox protein cut-like 2 (CUX2) (Homo sapiens (Human)).